The following is a 292-amino-acid chain: Formamidopyrimidine-DNA glycosylase (292 aa).

Catalysis depends on Pro2, which acts as the Schiff-base intermediate with DNA. The active-site Proton donor is the Glu3. Lys61 functions as the Proton donor; for beta-elimination activity in the catalytic mechanism. DNA contacts are provided by His96, Arg115, and Lys161. An FPG-type zinc finger spans residues 247–281; that stretch reads SAYGQEDRPCPRCGTAIRREKFMNRSSFSCPKCQP. Residue Arg271 is the Proton donor; for delta-elimination activity of the active site.

This sequence belongs to the FPG family. As to quaternary structure, monomer. Requires Zn(2+) as cofactor.

It catalyses the reaction Hydrolysis of DNA containing ring-opened 7-methylguanine residues, releasing 2,6-diamino-4-hydroxy-5-(N-methyl)formamidopyrimidine.. The enzyme catalyses 2'-deoxyribonucleotide-(2'-deoxyribose 5'-phosphate)-2'-deoxyribonucleotide-DNA = a 3'-end 2'-deoxyribonucleotide-(2,3-dehydro-2,3-deoxyribose 5'-phosphate)-DNA + a 5'-end 5'-phospho-2'-deoxyribonucleoside-DNA + H(+). Involved in base excision repair of DNA damaged by oxidation or by mutagenic agents. Acts as a DNA glycosylase that recognizes and removes damaged bases. Has a preference for oxidized purines, such as 7,8-dihydro-8-oxoguanine (8-oxoG). Has AP (apurinic/apyrimidinic) lyase activity and introduces nicks in the DNA strand. Cleaves the DNA backbone by beta-delta elimination to generate a single-strand break at the site of the removed base with both 3'- and 5'-phosphates. The polypeptide is Formamidopyrimidine-DNA glycosylase (Rhodococcus jostii (strain RHA1)).